The chain runs to 368 residues: tRNA-specific 2-thiouridylase MnmA (368 aa).

ATP-binding positions include 10–17 (AMSGGIDS) and methionine 36. Cysteine 106 serves as the catalytic Nucleophile. Residues cysteine 106 and cysteine 203 are joined by a disulfide bond. Glycine 130 is an ATP binding site. The segment at 152–154 (KDQ) is interaction with tRNA. Cysteine 203 functions as the Cysteine persulfide intermediate in the catalytic mechanism. Positions 313–314 (RY) are interaction with tRNA.

The protein belongs to the MnmA/TRMU family.

It localises to the cytoplasm. The enzyme catalyses S-sulfanyl-L-cysteinyl-[protein] + uridine(34) in tRNA + AH2 + ATP = 2-thiouridine(34) in tRNA + L-cysteinyl-[protein] + A + AMP + diphosphate + H(+). Catalyzes the 2-thiolation of uridine at the wobble position (U34) of tRNA, leading to the formation of s(2)U34. This Cytophaga hutchinsonii (strain ATCC 33406 / DSM 1761 / CIP 103989 / NBRC 15051 / NCIMB 9469 / D465) protein is tRNA-specific 2-thiouridylase MnmA.